A 244-amino-acid polypeptide reads, in one-letter code: Mannose-binding protein C (244 aa).

An N-terminal signal peptide occupies residues 1 to 18 (MSIFTSFLLLCVVTVVYA). The 59-residue stretch at 38-96 (GLNGFPGKDGRDGAKGEKGEPGQGLRGLQGPPGKVGPTGPPGNPGLKGAVGPKGDRGDR) folds into the Collagen-like domain. The tract at residues 40–101 (NGFPGKDGRD…DRGDRAEFDT (62 aa)) is disordered. Pro-43 bears the 4-hydroxyproline mark. Over residues 45–57 (KDGRDGAKGEKGE) the composition is skewed to basic and acidic residues. Residues Pro-58, Pro-69, Pro-78, and Pro-81 each carry the 4-hydroxyproline modification. A compositionally biased stretch (low complexity) spans 65–74 (LQGPPGKVGP). The segment covering 90 to 99 (KGDRGDRAEF) has biased composition (basic and acidic residues). A coiled-coil region spans residues 108–126 (IAALRSELRALRNWVLFSL). One can recognise a C-type lectin domain in the interval 129 to 241 (KVGKKYFVSS…CSDSFLAICE (113 aa)). Disulfide bonds link Cys-151–Cys-240 and Cys-218–Cys-232. Residue Asn-210 is glycosylated (N-linked (GlcNAc...) asparagine).

Oligomeric complex of 3 or more homotrimers. Interacts with MASP1 and MASP2. Interacts with MEP1A and MEP1B and may inhibit their catalytic activity. Hydroxylation on proline residues within the sequence motif, GXPG, is most likely to be 4-hydroxy as this fits the requirement for 4-hydroxylation in vertebrates.

Its subcellular location is the secreted. Its function is as follows. Calcium-dependent lectin involved in innate immune defense. Binds mannose, fucose and N-acetylglucosamine on different microorganisms and activates the lectin complement pathway. Binds to late apoptotic cells, as well as to apoptotic blebs and to necrotic cells, but not to early apoptotic cells, facilitating their uptake by macrophages. The sequence is that of Mannose-binding protein C (Mbl2) from Mus musculus (Mouse).